The sequence spans 509 residues: MADAEAAMTFPKKHKKKKERKPLPEADVAEIQHAEDFLIKPESKAAQLDTSQWPLLLKNFDRLNVRTTHYTPIPCGSNPLKREIGEYVRTGFINLDKPSNPSSHEVVAWIRRILRVEKTGHSGTLDPKVTGCLIVCIERATRLVKSQQSAGKEYVGVVRLHNAIEGTAQLSRALETLTGALFQRPPLIAAVKRQLRVRTIYESRVVEYDPERRLGVFWVSCEAGTYIRTLCVHLGLLLGVGGQMQELRRVRSGVVGERDHMVTMHDVLDAQYLYDHHRDESYLRRVVFPLEKLLTSHKRLVMKDSAVNAICYGAKIMLPGLLRYEDGIEVNQEVVVITTKGEAVCVAIALMTTAVISTCDHGVVAKIKRVIMERDTYPRKWGLGPKASQKKQLIKQGLLDKHGRPTDGTPASWTRDYVDYSDSSKKATAAEATPGPGVTADAASIVKRKRDSDSDADEATPTTTPRVKKEKKKKKEKADGGEEAAEDGDGDATRKKKKKKARAAEELSG.

A disordered region spans residues 1-25 (MADAEAAMTFPKKHKKKKERKPLPE). Residue A2 is modified to N-acetylalanine. Residues 2-22 (ADAEAAMTFPKKHKKKKERKP) are nucleolar localization. Residues 11 to 20 (PKKHKKKKER) are compositionally biased toward basic residues. Residues K21, K40, and K44 each participate in a glycyl lysine isopeptide (Lys-Gly) (interchain with G-Cter in SUMO2) cross-link. The active-site Nucleophile is D126. K192 is covalently cross-linked (Glycyl lysine isopeptide (Lys-Gly) (interchain with G-Cter in SUMO2)). Residues 297–372 (HKRLVMKDSA…VVAKIKRVIM (76 aa)) enclose the PUA domain. The tract at residues 381-509 (WGLGPKASQK…KARAAEELSG (129 aa)) is disordered. The residue at position 388 (S388) is a Phosphoserine. Glycyl lysine isopeptide (Lys-Gly) (interchain with G-Cter in SUMO2) cross-links involve residues K395 and K425. Positions 416–425 (DYVDYSDSSK) are enriched in basic and acidic residues. The interval 447 to 509 (KRKRDSDSDA…KARAAEELSG (63 aa)) is nuclear and nucleolar localization. 2 positions are modified to phosphoserine: S452 and S454. T460 carries the phosphothreonine modification. Positions 466–475 (RVKKEKKKKK) are enriched in basic residues. Positions 481–490 (GEEAAEDGDG) are enriched in acidic residues. S508 bears the Phosphoserine mark.

The protein belongs to the pseudouridine synthase TruB family. Part of the H/ACA small nucleolar ribonucleoprotein (H/ACA snoRNP) complex, which contains NHP2/NOLA2, GAR1/NOLA1, NOP10/NOLA3, and DKC1/NOLA4, which is presumed to be the catalytic subunit. The complex contains a stable core formed by binding of one or two NOP10-DKC1 heterodimers to NHP2; GAR1 subsequently binds to this core via DKC1. The complex binds a box H/ACA small nucleolar RNA (snoRNA), which may target the specific site of modification within the RNA substrate. During assembly, the complex contains NAF1 instead of GAR1/NOLA1. The complex also interacts with TERC, which contains a 3'-terminal domain related to the box H/ACA snoRNAs. Specific interactions with snoRNAs or TERC are mediated by GAR1 and NHP2. Associates with NOLC1/NOPP140. H/ACA snoRNPs interact with the SMN complex, consisting of SMN1 or SMN2, GEMIN2/SIP1, DDX20/GEMIN3, and GEMIN4. This is mediated by interaction between GAR1 and SMN1 or SMN2. The SMN complex may be required for correct assembly of the H/ACA snoRNP complex. Component of the telomerase holoenzyme complex composed of one molecule of TERT, one molecule of WRAP53/TCAB1, two molecules of H/ACA ribonucleoprotein complex subunits DKC1, NOP10, NHP2 and GAR1, and a telomerase RNA template component (TERC). The telomerase holoenzyme complex is associated with TEP1, SMG6/EST1A and POT1. Interacts with SHQ1; this interaction may lead to the stabilization of DKC1, from the time of its synthesis until its association with NOP10, NHP2, and NAF1 at the nascent H/ACA RNA. Interacts with HMBOX1. Interacts with DHX36.

It localises to the nucleus. It is found in the nucleolus. Its subcellular location is the cajal body. It catalyses the reaction uridine in 5S rRNA = pseudouridine in 5S rRNA. Functionally, catalytic subunit of H/ACA small nucleolar ribonucleoprotein (H/ACA snoRNP) complex, which catalyzes pseudouridylation of rRNA. This involves the isomerization of uridine such that the ribose is subsequently attached to C5, instead of the normal N1. Each rRNA can contain up to 100 pseudouridine ('psi') residues, which may serve to stabilize the conformation of rRNAs. Required for ribosome biogenesis and telomere maintenance. Also required for correct processing or intranuclear trafficking of TERC, the RNA component of the telomerase reverse transcriptase (TERT) holoenzyme. The protein is H/ACA ribonucleoprotein complex subunit DKC1 (Dkc1) of Rattus norvegicus (Rat).